Consider the following 400-residue polypeptide: Cytoplasmic tRNA 2-thiolation protein 2 (400 aa).

Belongs to the CTU2/NCS2 family.

Its subcellular location is the cytoplasm. It participates in tRNA modification; 5-methoxycarbonylmethyl-2-thiouridine-tRNA biosynthesis. Plays a central role in 2-thiolation of mcm(5)S(2)U at tRNA wobble positions of tRNA(Lys), tRNA(Glu) and tRNA(Gln). May act by forming a heterodimer with NCS6/CTU1 that ligates sulfur from thiocarboxylated URM1 onto the uridine of tRNAs at wobble position. The chain is Cytoplasmic tRNA 2-thiolation protein 2 from Drosophila virilis (Fruit fly).